The primary structure comprises 77 residues: uncharacterized protein (77 aa).

This is an uncharacterized protein from Vaccinia virus (strain Copenhagen) (VACV).